A 514-amino-acid chain; its full sequence is Intracellular exo-alpha-L-arabinofuranosidase (514 aa).

Alpha-L-arabinofuranose contacts are provided by E47 and N194. E195 serves as the catalytic Proton donor/acceptor. The alpha-L-arabinofuranose site is built by Y261, E317, and Q366. The active-site Nucleophile is the E317.

Belongs to the glycosyl hydrolase 51 family. As to quaternary structure, homohexamer; trimer of dimers.

It localises to the cytoplasm. It carries out the reaction Hydrolysis of terminal non-reducing alpha-L-arabinofuranoside residues in alpha-L-arabinosides.. It participates in glycan metabolism; L-arabinan degradation. Its function is as follows. Involved in the degradation of arabinan and is a key enzyme in the complete degradation of the plant cell wall. Catalyzes the cleavage of terminal alpha-L-arabinofuranosyl residues in different hemicellulosic homopolysaccharides (branched and debranched arabinans) and heteropolysaccharides (arabinoxylans). In Bacteroides ovatus, this protein is Intracellular exo-alpha-L-arabinofuranosidase (asdII).